Reading from the N-terminus, the 434-residue chain is Mitochondrial distribution and morphology protein 10 (434 aa).

This sequence belongs to the MDM10 family. In terms of assembly, component of the ER-mitochondria encounter structure (ERMES) or MDM complex, composed of mmm1, mdm10, mdm12 and mdm34. Associates with the mitochondrial outer membrane sorting assembly machinery SAM(core) complex.

The protein resides in the mitochondrion outer membrane. Functionally, component of the ERMES/MDM complex, which serves as a molecular tether to connect the endoplasmic reticulum and mitochondria. Components of this complex are involved in the control of mitochondrial shape and protein biogenesis and may function in phospholipid exchange. mdm10 is involved in the late assembly steps of the general translocase of the mitochondrial outer membrane (TOM complex). Functions in the tom40-specific route of the assembly of outer membrane beta-barrel proteins, including the association of tom40 with the receptor tom22 and small TOM proteins. Can associate with the SAM(core) complex as well as the mdm12-mmm1 complex, both involved in late steps of the major beta-barrel assembly pathway, that is responsible for biogenesis of all outer membrane beta-barrel proteins. May act as a switch that shuttles between both complexes and channels precursor proteins into the tom40-specific pathway. Plays a role in mitochondrial morphology and in the inheritance of mitochondria. This chain is Mitochondrial distribution and morphology protein 10 (mdmB), found in Aspergillus niger (strain ATCC MYA-4892 / CBS 513.88 / FGSC A1513).